The sequence spans 307 residues: Ribosomal RNA small subunit methyltransferase H (307 aa).

Residues 33–35 (AGH), D52, L83, D97, and Q104 contribute to the S-adenosyl-L-methionine site.

Belongs to the methyltransferase superfamily. RsmH family.

It is found in the cytoplasm. The enzyme catalyses cytidine(1402) in 16S rRNA + S-adenosyl-L-methionine = N(4)-methylcytidine(1402) in 16S rRNA + S-adenosyl-L-homocysteine + H(+). Functionally, specifically methylates the N4 position of cytidine in position 1402 (C1402) of 16S rRNA. This is Ribosomal RNA small subunit methyltransferase H from Sulfurovum sp. (strain NBC37-1).